Here is a 342-residue protein sequence, read N- to C-terminus: dTDP-3,4-didehydro-2,6-dideoxy-alpha-D-glucose 3-reductase (342 aa).

Residue 19 to 25 (CADIALR) participates in NADP(+) binding. Arg26 serves as a coordination point for substrate. NADP(+) contacts are provided by residues 44-45 (SR), Tyr65, Leu81, and His86. Lys104 acts as the Proton donor in catalysis. 2 residues coordinate NADP(+): Arg172 and Asp184. Substrate-binding residues include Tyr243 and Ser263.

Belongs to the Gfo/Idh/MocA family.

The catalysed reaction is dTDP-4-dehydro-2,6-dideoxy-alpha-D-glucose + NADP(+) = dTDP-3,4-didehydro-2,6-dideoxy-alpha-D-glucose + NADPH + H(+). Its pathway is antibiotic biosynthesis; granaticin biosynthesis. Its function is as follows. Involved in the biosynthesis of the 2,6-deoxysugar, dTDP-L-rhodinose, attached to the benzoisochromane quinone chromophore to produce the aglycone antibiotics granaticin and granaticin B. Catalyzes the reduction of the C-3 keto moiety of dTDP-3,4-diketo-2,6-dideoxy-alpha-D-glucose to yield dTDP-4-keto-2,6-dideoxy-alpha-D-glucose. NADPH is the better reductant, however NADH can also be used. The polypeptide is dTDP-3,4-didehydro-2,6-dideoxy-alpha-D-glucose 3-reductase (Streptomyces violaceoruber).